The following is a 357-amino-acid chain: Pheromone receptor 1 (357 aa).

7 consecutive transmembrane segments (helical) span residues 5-25, 32-52, 67-90, 110-130, 145-165, 206-226, and 268-288; these read ITPF…AWHI, LIML…NSMV, LSVR…ARKL, VIID…LMIV, WPMM…VIVV, LLLL…GTIA, and LILA…MFGL. The interval 338–357 is disordered; sequence ANTSTKSEKSDIDMRGSEAA. Over residues 343–357 the composition is skewed to basic and acidic residues; it reads KSEKSDIDMRGSEAA.

It belongs to the G-protein coupled receptor 4 family.

It is found in the membrane. In terms of biological role, receptor for the A2 pheromone, a prenylated mating factor. The sequence is that of Pheromone receptor 1 (PRA1) from Mycosarcoma maydis (Corn smut fungus).